A 303-amino-acid polypeptide reads, in one-letter code: Diaminopimelate epimerase (303 aa).

Residues Asn-15, Gln-47, and Asn-67 each coordinate substrate. Catalysis depends on Cys-76, which acts as the Proton donor. Substrate-binding positions include 77–78, Asn-163, Asn-197, and 215–216; these read GN and ER. Cys-224 serves as the catalytic Proton acceptor. A substrate-binding site is contributed by 225–226; sequence GS. A disordered region spans residues 278 to 303; sequence FDPATGEWSRDTQGLQGSGNADRGAA.

This sequence belongs to the diaminopimelate epimerase family. In terms of assembly, homodimer.

It is found in the cytoplasm. It carries out the reaction (2S,6S)-2,6-diaminopimelate = meso-2,6-diaminopimelate. The protein operates within amino-acid biosynthesis; L-lysine biosynthesis via DAP pathway; DL-2,6-diaminopimelate from LL-2,6-diaminopimelate: step 1/1. In terms of biological role, catalyzes the stereoinversion of LL-2,6-diaminopimelate (L,L-DAP) to meso-diaminopimelate (meso-DAP), a precursor of L-lysine and an essential component of the bacterial peptidoglycan. The polypeptide is Diaminopimelate epimerase (Brucella melitensis biotype 1 (strain ATCC 23456 / CCUG 17765 / NCTC 10094 / 16M)).